We begin with the raw amino-acid sequence, 431 residues long: Xaa-Arg dipeptidase (431 aa).

Belongs to the peptidase M20A family.

The enzyme catalyses beta-alanyl-L-lysine + H2O = beta-alanine + L-lysine. It carries out the reaction beta-alanyl-L-arginine + H2O = beta-alanine + L-arginine. The catalysed reaction is beta-alanyl-L-ornithine + H2O = beta-alanine + L-ornithine. It catalyses the reaction N(2)-(4-aminobutanoyl)-L-lysine + H2O = 4-aminobutanoate + L-lysine. The enzyme catalyses N(2)-(4-aminobutanoyl)-L-arginine + H2O = 4-aminobutanoate + L-arginine. It carries out the reaction N(2)-(4-aminobutanoyl)-L-ornithine + H2O = 4-aminobutanoate + L-ornithine. In terms of biological role, catalyzes the peptide bond hydrolysis in dipeptides having basic amino acids lysine, ornithine or arginine at C-terminus. Postulated to function in a metabolite repair mechanism by eliminating alternate dipeptide by-products formed during carnosine synthesis. The protein is Xaa-Arg dipeptidase of Mus musculus (Mouse).